A 71-amino-acid polypeptide reads, in one-letter code: Sec-independent protein translocase protein TatA (71 aa).

The helical transmembrane segment at 1-21 threads the bilayer; that stretch reads MGSFSLLHWLVVLVIVLLVFG. A disordered region spans residues 43 to 71; the sequence is LHEDDKPTDQLGSTSQSTASGPQQDHGKH. The segment covering 52 to 65 has biased composition (polar residues); it reads QLGSTSQSTASGPQ.

It belongs to the TatA/E family. The Tat system comprises two distinct complexes: a TatABC complex, containing multiple copies of TatA, TatB and TatC subunits, and a separate TatA complex, containing only TatA subunits. Substrates initially bind to the TatABC complex, which probably triggers association of the separate TatA complex to form the active translocon.

Its subcellular location is the cell inner membrane. Its function is as follows. Part of the twin-arginine translocation (Tat) system that transports large folded proteins containing a characteristic twin-arginine motif in their signal peptide across membranes. TatA could form the protein-conducting channel of the Tat system. The sequence is that of Sec-independent protein translocase protein TatA from Xylella fastidiosa (strain M12).